The chain runs to 342 residues: Small GTPase LIP1 (342 aa).

The small GTPase-like stretch occupies residues 12–285; the sequence is KEQILAPLCG…FHGDPYKYNN (274 aa). GTP-binding positions include 29–36, 90–94, and 160–163; these read GDSGVGKT, DVSGH, and NKAD. Disordered regions lie at residues 274–313 and 323–342; these read TSFHGDPYKYNNTIPPLPAQRNLTPPPTLYPQQPVSTPDN and SVQETTNNGSARSKRMDINV. Polar residues predominate over residues 323–333; it reads SVQETTNNGSA.

The protein belongs to the small GTPase superfamily.

It is found in the nucleus. Its subcellular location is the cytoplasm. Functional small GTPase that acts as a negative factor controlling the light-dependent period shortening of circadian rhythms and light-induced phase resetting during the subjective night. May protect the clock from excessive or mistimed light. Suppresses red and blue light-mediated photomorphogenesis and is required for light-controlled inhibition of endoreplication and tolerance to salt stress. The entrainment of the circadian clock is independent from the other pleiotropic effects. Could be a regulator of seedling establishment. This chain is Small GTPase LIP1, found in Arabidopsis thaliana (Mouse-ear cress).